Here is a 397-residue protein sequence, read N- to C-terminus: Formate-dependent phosphoribosylglycinamide formyltransferase (397 aa).

Residues 21–22 (EL) and E81 contribute to the N(1)-(5-phospho-beta-D-ribosyl)glycinamide site. Residues R113, K154, 194 to 197 (EEFV), and E202 each bind ATP. The region spanning 118-312 (RFAAEKLKLP…EFQIHVRSAI (195 aa)) is the ATP-grasp domain. Positions 271 and 283 each coordinate Mg(2+). N(1)-(5-phospho-beta-D-ribosyl)glycinamide contacts are provided by residues D290, K361, and 368 to 369 (RR).

The protein belongs to the PurK/PurT family. In terms of assembly, homodimer.

It catalyses the reaction N(1)-(5-phospho-beta-D-ribosyl)glycinamide + formate + ATP = N(2)-formyl-N(1)-(5-phospho-beta-D-ribosyl)glycinamide + ADP + phosphate + H(+). It participates in purine metabolism; IMP biosynthesis via de novo pathway; N(2)-formyl-N(1)-(5-phospho-D-ribosyl)glycinamide from N(1)-(5-phospho-D-ribosyl)glycinamide (formate route): step 1/1. In terms of biological role, involved in the de novo purine biosynthesis. Catalyzes the transfer of formate to 5-phospho-ribosyl-glycinamide (GAR), producing 5-phospho-ribosyl-N-formylglycinamide (FGAR). Formate is provided by PurU via hydrolysis of 10-formyl-tetrahydrofolate. The protein is Formate-dependent phosphoribosylglycinamide formyltransferase of Saccharolobus solfataricus (strain ATCC 35092 / DSM 1617 / JCM 11322 / P2) (Sulfolobus solfataricus).